The following is a 319-amino-acid chain: Aliphatic sulfonates import ATP-binding protein SsuB 1 (319 aa).

The 220-residue stretch at 63-282 folds into the ABC transporter domain; it reads VTLSGVSKRF…ARASAAFAAL (220 aa). 95–102 serves as a coordination point for ATP; that stretch reads GRSGCGKS.

Belongs to the ABC transporter superfamily. Aliphatic sulfonates importer (TC 3.A.1.17.2) family. In terms of assembly, the complex is composed of two ATP-binding proteins (SsuB), two transmembrane proteins (SsuC) and a solute-binding protein (SsuA).

It is found in the cell inner membrane. The enzyme catalyses ATP + H2O + aliphatic sulfonate-[sulfonate-binding protein]Side 1 = ADP + phosphate + aliphatic sulfonateSide 2 + [sulfonate-binding protein]Side 1.. In terms of biological role, part of the ABC transporter complex SsuABC involved in aliphatic sulfonates import. Responsible for energy coupling to the transport system. This Burkholderia lata (strain ATCC 17760 / DSM 23089 / LMG 22485 / NCIMB 9086 / R18194 / 383) protein is Aliphatic sulfonates import ATP-binding protein SsuB 1.